The sequence spans 506 residues: uncharacterized protein (506 aa).

Disordered stretches follow at residues 104-144 (PNSS…ATSS) and 397-456 (QQQK…DQLP). Over residues 130 to 144 (ESSPTLSSSSLATSS) the composition is skewed to low complexity. Residues 405 to 443 (IKDEDKNEKENKSENEEKEKEKEKEKEKEKEKEKEKEKE) show a composition bias toward basic and acidic residues. Positions 405 to 455 (IKDEDKNEKENKSENEEKEKEKEKEKEKEKEKEKEKEKENEEGEEDNGDQL) form a coiled coil.

This is an uncharacterized protein from Dictyostelium discoideum (Social amoeba).